A 410-amino-acid chain; its full sequence is Polyprenol-phosphate-mannose-dependent alpha-(1-2)-phosphatidylinositol pentamannoside mannosyltransferase (410 aa).

10 helical membrane passes run 31–51, 96–116, 160–180, 188–208, 214–234, 276–296, 306–326, 328–348, 351–371, and 384–404; these read LAPMLLVVSILARLAWTYLVP, FAAIVFYPLHLLPFGVVAFIW, TFDYGQVNVVLVLAVLCAVST, LLVGLAAGIKLTPAVAGLYFL, AAVACSAAVFFATVGVSWLVV, GFGPLVLIGIGITAVLALLAW, LGGILVVSLFGLVLSPISWTH, WVWLIPLMMWLLHGPLSALRG, ILGWGWLALTLLGVPWLLSFA, and LAWAGLVYIVATLATLGWIAF.

It belongs to the glycosyltransferase 87 family.

The protein resides in the cell membrane. It participates in phospholipid metabolism; phosphatidylinositol metabolism. Catalyzes the alpha-1,2 addition of a mannose residue from polyprenol-phosphate-mannose (PPM) to a monoacyl phosphatidylinositol tetramannoside (AcPIM4) to generate a monoacyl phosphatidylinositol pentamannoside (AcPIM5). The sequence is that of Polyprenol-phosphate-mannose-dependent alpha-(1-2)-phosphatidylinositol pentamannoside mannosyltransferase from Mycolicibacterium smegmatis (strain ATCC 700084 / mc(2)155) (Mycobacterium smegmatis).